A 495-amino-acid polypeptide reads, in one-letter code: UDP-glycosyltransferase 73E1 (495 aa).

UDP-alpha-D-glucose-binding positions include Ser299, 355 to 356 (WA), 373 to 381 (HCGWNSTIE), and 395 to 398 (FADQ).

The protein belongs to the UDP-glycosyltransferase family.

In terms of biological role, may glycosylate diterpenes or flavonols in leaves. In Stevia rebaudiana (Stevia), this protein is UDP-glycosyltransferase 73E1.